A 373-amino-acid polypeptide reads, in one-letter code: MRALTPPTIRAAFRGQLGGFALDAAFTVPATGITGLFGPSGCGKSSVLRCLAGLQHLPGSSCEVGGEVWQDDTTFLKPHHRPIGYVFQEASLFQHLSVKANLLYGAPRESGKAHADAVEFDEVIELLGLAKLLARSPRNLSGGERQRVAIGRALLSQPKLLLMDEPLSALDRLTKDEILPFLERLHARLSLPVIYVSHDITEIERLADHLVLMQSGKVLAVGPLTELQSDPKLPLAIARDAAVNFDAEVESYDADYGLVRLQIDGGRLLVPSAPVATGEFRRVRIAASDVSLARELPQASSILNAIAARIVITSPVGANEMLVVLALGREGHGGRLLARLSRRSWDLLQLAEGVDVYAQIKGVALAPGRDGHV.

The ABC transporter domain maps to 4–240 (LTPPTIRAAF…PKLPLAIARD (237 aa)). ATP is bound at residue 38–45 (GPSGCGKS). A Mop domain is found at 299-369 (ASSILNAIAA…IKGVALAPGR (71 aa)).

The protein belongs to the ABC transporter superfamily. Molybdate importer (TC 3.A.1.8) family. In terms of assembly, the complex is composed of two ATP-binding proteins (ModC), two transmembrane proteins (ModB) and a solute-binding protein (ModA).

The protein localises to the cell inner membrane. It carries out the reaction molybdate(out) + ATP + H2O = molybdate(in) + ADP + phosphate + H(+). In terms of biological role, part of the ABC transporter complex ModABC involved in molybdenum import. Responsible for energy coupling to the transport system. The chain is Molybdenum import ATP-binding protein ModC from Rhodopseudomonas palustris (strain ATCC BAA-98 / CGA009).